The chain runs to 78 residues: Alpha-amylase inhibitor Haim-1 (78 aa).

2 disulfides stabilise this stretch: Cys-11-Cys-27 and Cys-45-Cys-72.

In terms of biological role, inhibits mammalian alpha-amylases specifically but has no action on plant and microbial alpha-amylases. The sequence is that of Alpha-amylase inhibitor Haim-1 from Streptomyces griseosporeus.